We begin with the raw amino-acid sequence, 111 residues long: Phosphoribosyl-ATP pyrophosphatase (111 aa).

The protein belongs to the PRA-PH family.

The protein resides in the cytoplasm. It catalyses the reaction 1-(5-phospho-beta-D-ribosyl)-ATP + H2O = 1-(5-phospho-beta-D-ribosyl)-5'-AMP + diphosphate + H(+). Its pathway is amino-acid biosynthesis; L-histidine biosynthesis; L-histidine from 5-phospho-alpha-D-ribose 1-diphosphate: step 2/9. In Alcanivorax borkumensis (strain ATCC 700651 / DSM 11573 / NCIMB 13689 / SK2), this protein is Phosphoribosyl-ATP pyrophosphatase.